The sequence spans 57 residues: Potassium channel toxin KTx1 (57 aa).

A signal peptide spans 1-13 (FLVLLLVSLMCYA). The propeptide occupies 14 to 18 (EIAEG). Disulfide bonds link cysteine 24–cysteine 37, cysteine 30–cysteine 42, and cysteine 36–cysteine 51.

It belongs to the scorpion calcin-like family. KTX subfamily. As to expression, expressed by the venom gland.

Its subcellular location is the secreted. In terms of biological role, this recombinant peptide inhibits voltage-gated potassium channels mKv1.3/KCNA3 (IC(50)=1.70 uM), mKv1.1/KCNA1 (10 uM inhibits 40% of currents) and hKv1.2/KCNA2 (10 uM inhibits 42% of currents). May also increase intracellular calcium release through the activation of nuclear inositol 1,4,5-trisphosphate receptors (ITPR) of cardiomyocytes, thereby causing an increase in the contraction frequency of these cells. In Isometrus maculatus (Lesser brown scorpion), this protein is Potassium channel toxin KTx1.